The following is a 136-amino-acid chain: Interleukin-13 (136 aa).

Positions 1–18 (MALWLTVVIAFTCIGGLA) are cleaved as a signal peptide. N-linked (GlcNAc...) asparagine glycans are attached at residues N38, N49, N57, N72, N75, and N131. Cystine bridges form between C48–C76 and C64–C90.

Belongs to the IL-4/IL-13 family. As to quaternary structure, interacts with IL13RA2.

The protein localises to the secreted. In terms of biological role, cytokine that plays important roles in allergic inflammation and immune response to parasite infection. Synergizes with IL2 in regulating interferon-gamma synthesis. Stimulates B-cell proliferation, and activation of eosinophils, basophils, and mast cells. Plays an important role in controlling IL33 activity by modulating the production of transmembrane and soluble forms of interleukin-1 receptor-like 1/IL1RL1. Displays the capacity to antagonize Th1-driven proinflammatory immune response and downregulates synthesis of many proinflammatory cytokines including IL1, IL6, IL10, IL12 and TNF-alpha through a mechanism that partially involves suppression of NF-kappa-B. Also functions on nonhematopoietic cells, including endothelial cells where it induces vascular cell adhesion protein 1/VCAM1, which is important in the recruitment of eosinophils. Exerts its biological effects through its receptors which comprises the IL4R chain and the IL13RA1 chain, to activate JAK1 and TYK2, leading to the activation of STAT6. Aside from IL13RA1, another receptor IL13RA2 acts as a high affinity decoy for IL13 and mediates internalization and depletion of extracellular IL13. The chain is Interleukin-13 (IL13) from Camelus bactrianus (Bactrian camel).